The following is a 687-amino-acid chain: Histone deacetylase clr3 (687 aa).

The tract at residues 55 to 385 is histone deacetylase; it reads KKSGLCYDPR…ALAVAQSLLG (331 aa). H195 is an active-site residue.

This sequence belongs to the histone deacetylase family. HD type 2 subfamily. Interacts with ccq1, clr1, clr2 and mit1.

It localises to the nucleus. Its subcellular location is the chromosome. It is found in the centromere. The protein localises to the telomere. It carries out the reaction N(6)-acetyl-L-lysyl-[histone] + H2O = L-lysyl-[histone] + acetate. In terms of biological role, responsible for the deacetylation of lysine residues on the N-terminal part of the core histones (H2A, H2B, H3 and H4). Histone deacetylation gives a tag for epigenetic repression and plays an important role in transcriptional regulation, cell cycle progression and developmental events. Histone deacetylases act via the formation of large multiprotein complexes. Required for proper positioning of nucleosomes at heterochromatic loci and for transcriptional gene silencing (TGS) function of the Snf2/Hdac-containing repressor complex (SHREC). The chain is Histone deacetylase clr3 (clr3) from Schizosaccharomyces pombe (strain 972 / ATCC 24843) (Fission yeast).